Consider the following 166-residue polypeptide: Phospholipase A2 inhibitor B1 (166 aa).

Positions 1 to 19 are cleaved as a signal peptide; sequence MRLILLSGLLLLGTFLVNG. The 116-residue stretch at 46 to 161 folds into the C-type lectin domain; the sequence is LFHAFLTVHK…CDDNLLVVCE (116 aa). 2 cysteine pairs are disulfide-bonded: cysteine 83–cysteine 160 and cysteine 138–cysteine 152. N-linked (GlcNAc...) asparagine glycosylation is present at asparagine 122.

It belongs to the alpha-type phospholipase A2 inhibitor family. As to quaternary structure, homotrimer; non-covalently linked. Expressed by the liver.

It localises to the secreted. This phospholipase A2 inhibitor binds directly phospholipase A2 in the presence or absence of calcium. The chain is Phospholipase A2 inhibitor B1 from Crotalus durissus terrificus (South American rattlesnake).